Reading from the N-terminus, the 207-residue chain is dITP/XTP pyrophosphatase (207 aa).

Position 7–12 (7–12) interacts with substrate; that stretch reads SNNAKK. Asp72 functions as the Proton acceptor in the catalytic mechanism. A Mg(2+)-binding site is contributed by Asp72. Residues Ser73, 155–158, Lys183, and 188–189 each bind substrate; these read FGYD and HR.

This sequence belongs to the HAM1 NTPase family. In terms of assembly, homodimer. The cofactor is Mg(2+).

The enzyme catalyses XTP + H2O = XMP + diphosphate + H(+). The catalysed reaction is dITP + H2O = dIMP + diphosphate + H(+). It catalyses the reaction ITP + H2O = IMP + diphosphate + H(+). Functionally, pyrophosphatase that catalyzes the hydrolysis of nucleoside triphosphates to their monophosphate derivatives, with a high preference for the non-canonical purine nucleotides XTP (xanthosine triphosphate), dITP (deoxyinosine triphosphate) and ITP. Seems to function as a house-cleaning enzyme that removes non-canonical purine nucleotides from the nucleotide pool, thus preventing their incorporation into DNA/RNA and avoiding chromosomal lesions. This Corynebacterium diphtheriae (strain ATCC 700971 / NCTC 13129 / Biotype gravis) protein is dITP/XTP pyrophosphatase.